Here is a 224-residue protein sequence, read N- to C-terminus: Urease accessory protein UreF 2 (224 aa).

The protein belongs to the UreF family. UreD, UreF and UreG form a complex that acts as a GTP-hydrolysis-dependent molecular chaperone, activating the urease apoprotein by helping to assemble the nickel containing metallocenter of UreC. The UreE protein probably delivers the nickel.

The protein localises to the cytoplasm. In terms of biological role, required for maturation of urease via the functional incorporation of the urease nickel metallocenter. The chain is Urease accessory protein UreF 2 from Pseudomonas syringae pv. tomato (strain ATCC BAA-871 / DC3000).